The chain runs to 1316 residues: Tetratricopeptide repeat protein 21B (1316 aa).

TPR repeat units lie at residues 108 to 141 (EKAL…SDGS), 145 to 178 (HVLK…GNDT), 180 to 211 (ALLG…FPSF), 285 to 323 (AQLF…NPQQ), 324 to 357 (SEFA…DETS), 492 to 525 (LQTV…NPSY), 563 to 596 (PLYH…PGMK), 617 to 650 (LSIF…FSGT), 722 to 755 (PRSF…NPKD), 757 to 789 (TLAS…GQKN), 791 to 822 (LCYD…EPVN), 831 to 864 (GRCQ…QARV), 884 to 917 (AEIC…CETD), 919 to 951 (KIML…DQDN), 952 to 985 (EAAT…KPDN), 1023 to 1056 (PGFQ…RDWG), 1197 to 1230 (EKSW…NRSC), 1232 to 1264 (KAYE…SNRT), and 1266 to 1299 (PAVG…HPTY).

The protein belongs to the TTC21 family. Component of the IFT complex A (IFT-A) complex. IFT-A complex is divided into a core subcomplex composed of IFT122:IFT140:WDR19 which is associated with TULP3 and a peripheral subcomplex composed of IFT43:WDR35:TTC21B. Interacts directy with WDR35 and TTC21B. Interacts with TTC25.

Its subcellular location is the cytoplasm. The protein localises to the cytoskeleton. The protein resides in the cilium axoneme. In terms of biological role, component of the IFT complex A (IFT-A), a complex required for retrograde ciliary transport and entry into cilia of G protein-coupled receptors (GPCRs). Essential for retrograde trafficking of IFT-1, IFT-B and GPCRs. Negatively modulates the SHH signal transduction. This Homo sapiens (Human) protein is Tetratricopeptide repeat protein 21B.